Consider the following 360-residue polypeptide: Proline-rich protein 11 (360 aa).

Disordered regions lie at residues 20–43 (KKKE…SPER) and 174–201 (PPTL…PPLA). Thr33 is modified (phosphothreonine). Phosphoserine is present on Ser40. Residues 175-201 (PTLPQPASHFPPPPPPPPLPPPPPPLA) are compositionally biased toward pro residues. A Phosphodegron motif is present at residues 285–291 (LITPGKS). Thr287 is subject to Phosphothreonine. Residue Ser291 is modified to Phosphoserine. Positions 296 to 304 (RKLLRKVDV) match the D-box motif. A KEN box motif is present at residues 316 to 318 (KEN). The short motif at 325-330 (LTPVMT) is the Phosphodegron element. Residues 340 to 360 (AHPRSPTPTLPLSTSSFDEQN) form a disordered region. Position 344 is a phosphoserine (Ser344). Residues Thr346 and Thr348 each carry the phosphothreonine modification. The segment covering 349–360 (LPLSTSSFDEQN) has biased composition (low complexity).

In terms of processing, ubiquitinated. Rapidly degraded by the proteasome; degradation may involve FBXW7-specific phosphorylated phosphodegron motifs. As to expression, ubiquitously expressed.

The protein resides in the cytoplasm. It localises to the nucleus. Plays a critical role in cell cycle progression. The polypeptide is Proline-rich protein 11 (PRR11) (Homo sapiens (Human)).